Here is an 896-residue protein sequence, read N- to C-terminus: Protein translocase subunit SecA (896 aa).

Residues glutamine 87, 105–109, and aspartate 507 contribute to the ATP site; that span reads GEGKT. The tract at residues 853–879 is disordered; that stretch reads ESLSENDEASETQTFRRQEKKIGRNDP. Basic and acidic residues predominate over residues 866–876; sequence TFRRQEKKIGR. 4 residues coordinate Zn(2+): cysteine 880, cysteine 882, cysteine 891, and histidine 892.

The protein belongs to the SecA family. In terms of assembly, monomer and homodimer. Part of the essential Sec protein translocation apparatus which comprises SecA, SecYEG and auxiliary proteins SecDF-YajC and YidC. It depends on Zn(2+) as a cofactor.

It is found in the cell inner membrane. The protein resides in the cytoplasm. It carries out the reaction ATP + H2O + cellular proteinSide 1 = ADP + phosphate + cellular proteinSide 2.. Its function is as follows. Part of the Sec protein translocase complex. Interacts with the SecYEG preprotein conducting channel. Has a central role in coupling the hydrolysis of ATP to the transfer of proteins into and across the cell membrane, serving both as a receptor for the preprotein-SecB complex and as an ATP-driven molecular motor driving the stepwise translocation of polypeptide chains across the membrane. The protein is Protein translocase subunit SecA of Legionella pneumophila subsp. pneumophila (strain Philadelphia 1 / ATCC 33152 / DSM 7513).